The primary structure comprises 248 residues: Transmembrane protein 182 (248 aa).

An N-terminal signal peptide occupies residues M1–G26. At T27 to S136 the chain is on the extracellular side. N-linked (GlcNAc...) asparagine glycosylation is found at N66 and N119. The chain crosses the membrane as a helical span at residues M137–F157. The Cytoplasmic segment spans residues A158–G167. Residues G168–I188 form a helical membrane-spanning segment. Over D189–S218 the chain is Extracellular. N212 is a glycosylation site (N-linked (GlcNAc...) asparagine). A helical membrane pass occupies residues F219 to I239. At G240 to N248 the chain is on the cytoplasmic side.

The protein belongs to the TMEM182 family.

The protein localises to the cell membrane. In terms of biological role, may negatively regulate myogenesis and skeletal muscle regeneration. This chain is Transmembrane protein 182 (tmem182a), found in Danio rerio (Zebrafish).